A 302-amino-acid chain; its full sequence is Ornithine carbamoyltransferase (302 aa).

Residues 52–55 (STRT), Q79, R103, and 130–133 (HPCQ) contribute to the carbamoyl phosphate site. L-ornithine-binding positions include N161, D222, and 226–227 (SM). Carbamoyl phosphate-binding positions include 262 to 263 (CL) and R290.

This sequence belongs to the aspartate/ornithine carbamoyltransferase superfamily. OTCase family.

The protein localises to the cytoplasm. The enzyme catalyses carbamoyl phosphate + L-ornithine = L-citrulline + phosphate + H(+). The protein operates within amino-acid biosynthesis; L-arginine biosynthesis; L-arginine from L-ornithine and carbamoyl phosphate: step 1/3. Reversibly catalyzes the transfer of the carbamoyl group from carbamoyl phosphate (CP) to the N(epsilon) atom of ornithine (ORN) to produce L-citrulline. The chain is Ornithine carbamoyltransferase from Syntrophus aciditrophicus (strain SB).